Reading from the N-terminus, the 1202-residue chain is CHD3-type chromatin-remodeling factor CHR7 (1202 aa).

Chromo domains are found at residues 45 to 109 and 142 to 201; these read GEIE…HPHL and KTVD…RDKY. A Helicase ATP-binding domain is found at 237-405; it reads RYSWSKKTNV…FALMHFLDAD (169 aa). 250–257 is an ATP binding site; sequence DEMGLGKT. Residues 356–359 carry the DEAH box motif; the sequence is DEGH. The Helicase C-terminal domain maps to 528–679; sequence LLDKMMVKLK…HLVVGKQHLC (152 aa). The tract at residues 838–872 is disordered; the sequence is TSDEEEEADEPEAARQRKPRTVTRPYRKRARDNSE. The span at 853 to 867 shows a compositional bias: basic residues; that stretch reads QRKPRTVTRPYRKRA.

The protein belongs to the SNF2/RAD54 helicase family.

The protein resides in the nucleus. Functionally, chromatin remodeling factor that represses the expression of embryonic trait genes upon and after seed germination and thus enables the developmental switch to post-germinative growth. The sequence is that of CHD3-type chromatin-remodeling factor CHR7 from Arabidopsis thaliana (Mouse-ear cress).